The primary structure comprises 326 residues: MGRSPCCDKLGLKKGPWTPEEDQKLLAYIEEHGHGSWRSLPEKAGLHRCGKSCRLRWTNYLRPDIKRGKFNLQEEQTIIQLHALLGNRWSAIATHLPKRTDNEIKNYWNTHLKKRLVKMGIDPVTHKPKNETPLSSLGLSKNAAILSHTAQWESARLEAEARLARESKLLHLQHYQTKTSSQPHHHHGFTHKSLLPNWTTKPHEDQQQLESPTSTVSFSEMKESIPAKIEFVGSSTGVTLMKEPEHDWINSTMHEFETTQMGEGIEEGFTGLLLGGDSIDRSFSGDKNETAGESSGGDCNYYEDNKNYLDSIFNFVDPSPSDSPMF.

HTH myb-type domains lie at 9 to 61 (KLGL…TNYL) and 62 to 116 (RPDI…KKRL). DNA-binding regions (H-T-H motif) lie at residues 37-61 (WRSLPEKAGLHRCGKSCRLRWTNYL) and 89-112 (WSAIATHLPKRTDNEIKNYWNTHL). Disordered stretches follow at residues 197–217 (NWTTKPHEDQQQLESPTSTVS) and 280–299 (DRSFSGDKNETAGESSGGDC). Residues 208–217 (QLESPTSTVS) show a composition bias toward polar residues. Over residues 280-290 (DRSFSGDKNET) the composition is skewed to basic and acidic residues.

As to expression, expressed in trichomes, epidermis and mesophyll cells of young leaves, stems, petals, sepals, carpels and stamens.

It localises to the nucleus. Its function is as follows. Involved in the control of epidermal cell morphogenesis in petals. Promotes unidirectional cell expansion once outgrowth has been initiated. Coordinately with WIN1/SHN1, participates in the regulation of cuticle biosynthesis and wax accumulation in reproductive organs and trichomes. Functions in cuticle nanoridge formation in petals and stamens, and in morphogenesis of petal conical cells and trichomes. Functions as a major regulator of cuticle formation in vegetative organs by regulating the cuticle biosynthesis genes CYP86A8/LCR and CER1. This Arabidopsis thaliana (Mouse-ear cress) protein is Transcription factor MYB16.